Consider the following 349-residue polypeptide: Anthranilate phosphoribosyltransferase (349 aa).

5-phospho-alpha-D-ribose 1-diphosphate is bound by residues G87, 90–91 (GD), T95, 97–100 (NIST), 115–123 (KHGNRSVSS), and S127. G87 is an anthranilate binding site. S99 contributes to the Mg(2+) binding site. N118 is an anthranilate binding site. Position 173 (R173) interacts with anthranilate. Mg(2+) contacts are provided by D231 and E232.

This sequence belongs to the anthranilate phosphoribosyltransferase family. Homodimer. Mg(2+) serves as cofactor.

It carries out the reaction N-(5-phospho-beta-D-ribosyl)anthranilate + diphosphate = 5-phospho-alpha-D-ribose 1-diphosphate + anthranilate. It functions in the pathway amino-acid biosynthesis; L-tryptophan biosynthesis; L-tryptophan from chorismate: step 2/5. Catalyzes the transfer of the phosphoribosyl group of 5-phosphorylribose-1-pyrophosphate (PRPP) to anthranilate to yield N-(5'-phosphoribosyl)-anthranilate (PRA). This chain is Anthranilate phosphoribosyltransferase, found in Shewanella loihica (strain ATCC BAA-1088 / PV-4).